The primary structure comprises 456 residues: Cobyrinate a,c-diamide synthase (456 aa).

In terms of domain architecture, GATase cobBQ-type spans P247–W439. C330 functions as the Nucleophile in the catalytic mechanism.

Belongs to the CobB/CbiA family. Mg(2+) serves as cofactor.

It carries out the reaction cob(II)yrinate + 2 L-glutamine + 2 ATP + 2 H2O = cob(II)yrinate a,c diamide + 2 L-glutamate + 2 ADP + 2 phosphate + 2 H(+). The protein operates within cofactor biosynthesis; adenosylcobalamin biosynthesis; cob(II)yrinate a,c-diamide from sirohydrochlorin (anaerobic route): step 10/10. Its function is as follows. Catalyzes the ATP-dependent amidation of the two carboxylate groups at positions a and c of cobyrinate, using either L-glutamine or ammonia as the nitrogen source. The chain is Cobyrinate a,c-diamide synthase from Synechococcus sp. (strain ATCC 27144 / PCC 6301 / SAUG 1402/1) (Anacystis nidulans).